We begin with the raw amino-acid sequence, 658 residues long: Heat shock 70 kDa protein, mitochondrial (658 aa).

Residues Lys629 to Lys658 are disordered. Over residues Asp631–Thr640 the composition is skewed to low complexity. A compositionally biased stretch (basic and acidic residues) spans Glu641–Lys658.

It belongs to the heat shock protein 70 family.

It localises to the mitochondrion. In terms of biological role, may function in protein folding and assembly, and disassembly of protein complexes. In Dictyostelium discoideum (Social amoeba), this protein is Heat shock 70 kDa protein, mitochondrial (mhsp70).